Here is a 323-residue protein sequence, read N- to C-terminus: Protein translocase subunit SecF (323 aa).

The next 6 membrane-spanning stretches (helical) occupy residues 19 to 39, 138 to 158, 162 to 182, 189 to 209, 244 to 264, and 269 to 289; these read GVIV…FKGF, ILSL…RYEW, LASV…VIVF, EVIA…IIIF, LTVF…IIGF, and LIGT…VALL.

It belongs to the SecD/SecF family. SecF subfamily. As to quaternary structure, forms a complex with SecD. Part of the essential Sec protein translocation apparatus which comprises SecA, SecYEG and auxiliary proteins SecDF-YajC and YidC.

It localises to the cell inner membrane. Part of the Sec protein translocase complex. Interacts with the SecYEG preprotein conducting channel. SecDF uses the proton motive force (PMF) to complete protein translocation after the ATP-dependent function of SecA. The chain is Protein translocase subunit SecF from Helicobacter pylori (strain ATCC 700392 / 26695) (Campylobacter pylori).